Consider the following 661-residue polypeptide: Protein WHI3 (661 aa).

A compositionally biased stretch (low complexity) spans 14-31 (ASSSDNVVSSTTNTHNIS). Residues 14–58 (ASSSDNVVSSTTNTHNISPSHRSSLNLNTTSHPHEASGRGSASGE) are disordered. Positions 32–44 (PSHRSSLNLNTTS) are enriched in polar residues. Ser231 is subject to Phosphoserine. 3 stretches are compositionally biased toward low complexity: residues 237–272 (DPFS…SPQQ), 383–409 (NTSA…SASS), and 496–508 (KNNS…SNIT). Disordered stretches follow at residues 237-280 (DPFS…QVNS), 383-410 (NTSA…ASSQ), 469-508 (EHMY…SNIT), and 613-661 (SSKG…HIKN). The RRM domain occupies 538-625 (NTLYVGNLPS…GGIRLSFSKN (88 aa)). Low complexity predominate over residues 628-647 (GVRGPNSRRGGSGNPNPNVN). The segment covering 648-661 (MLSSYNSNVGHIKN) has biased composition (polar residues).

Involved in size control and cell cycle. The protein is Protein WHI3 (WHI3) of Saccharomyces cerevisiae (strain ATCC 204508 / S288c) (Baker's yeast).